A 1937-amino-acid polypeptide reads, in one-letter code: MSAGSDAEMAIFGEAAPYLRKSEKERIEAQNKPFDAKTSVFVAEPKESYVKSVIQSKDGGKVTVKTESGATLTVKEDQVFPMNPPKYDKIEDMAMMTHLHEPGVLYNLKERYAAWMIYTYSGLFCVTVNPYKWLPVYNPEVVAAYRGKKRQEAPPHIFSISDNAYQFMLTDRENQSILITGESGAGKTVNTKRVIQYFATIAVTGDKKKEESGKMQGTLEDQIISANPLLEAFGNAKTVRNDNSSRFGKFIRIHFGTTGKLASADIETYLLEKSRVTFQLKAERSYHIFYQITSNKKPELIEMLLITTNPYDYAFVSQGEITVPSIDDQEELMATDSAIDILGFSPEEKVSIYKLTGAVMHYGNMKFKQKQREEQAEPDGTEVADKAAYLQCLNSADLLKALCYPRVKVGNEYVTKGQTVQQVYNAVGALAKAVYEKMFLWMVTRINQQLDTKQPRQYFIGVLDIAGFEIFDFNSLEQLCINFTNEKLQQFFNHHMFVLEQEEYKKEGIEWTFIDFGMDLAACIELIEKPLGIFSILEEECMFPKATDTSFKNKLYDQHLGKSNNFQKPKPTKGKAEAHFSLVHYAGTVDYNITGWLDKNKDPLNDTVVGLYQKSAMKTLASLFSTYASAEADGGAKKGAKKKGSSFQTVSALFRENLNKLMTNLRSTHPHFVRCIIPNETKTPGAMEHELVLHQLRCNGVLEGIRICRKGFPSRILYGDFKQRYKVLNASAIPEGQFIDSKKASEKLLGSIDIDHTQYKFGHTKVFFKAGLLGLLEEMRDEKLAQIITRTQAVCRGYLMRVEYQKMLLRRESIFCIQYNVRAFMNVKHWPWMKLFFKIKPLLKSAETEKEMATMKEEFQKTKDELAKSEAKRKELEEKMVTLLKEKNDLQLQVQSEADSLADAEERCEQLIKNKIQLEAKIKEVTERAEDEEEINAELTAKKRKLEDECSELKKDIDDLELTLAKVEKEKHATENKVKNLTEEMAGLDENIAKLTKEKKALQEAHQQTLDDLQAEEDKVNTLTKAKTKLEQQVDDLEGSLEQEKKLRMDLERAKRKLEGDLKLAQESTMDIENDKQQLDEKLKKKEFEISNLISKIEDEQAVEIQLQKKIKELQARIEELEEEIEAERASRAKAEKQRSDLSRELEEISERLEEAGGATSAQVEMNKKRETEFQKLRRDLEEATLQHEATAAALRKKHADSVAELGEQIDNLQRVKQKLEKEKSELKMEIDDLSSNAEAIAKAKGNLEKMCRTLEDQVSELKSKEEEQQRLINELTAQRARLQTEAGEYSRQLDEKDALVSQLSRSKQASTQQIEELKRQLEEETKAKNALAHALQSSRHDCDLLREQYEEEQEGKAELQRALSKANSEVAQWRTKYETDAIQRTEELEEAKKKLAQRLQAAEEHVEAVNAKCASLEKTKQRLQNEVEDLMIDVERTNAACAALDKKQRNFDKVLSEWRQKYEETQAELESCQKESRTLSTELFKVKNAYEESLDHLETLRRENKNLQQEISDLTEQIAEGGKHIHELEKIKKQVEQEKCEIQAALEEAEASLEHEEGKILRIQLELNQVKSEIDRKIAEKDEEIDQLKRNHVRVVETMQSTLDAEIRSRNDALRVKKKMEGDLNEMEIQLNHANRLAAESLRNYRNTQGILKDTQLHLDDALRGQEDLKEQLAIVERRANLLQAEIEELRATLEQTERSRKIAEQELLDASERVQLLHTQNTSLINTKKKLENDVSQLQSEVEEVIQESRNAEEKAKKAITDAAMMAEELKKEQDTSAHLERMKKNMEQTVKDLQHRLDEAEQLALKGGKKQIQKLEARVRELEGEVENEQKRNAEAVKGLRKHERRVKELTYQTEEDRKNVLRLQDLVDKLQAKVKSYKRQAEEAEEQSNANLAKFRKLQHELEEAEERADIAESQVNKLRVKSREVHTKISAE.

In terms of domain architecture, Myosin N-terminal SH3-like spans Asp-35 to Pro-84. Phosphothreonine occurs at positions 66 and 71. The 694-residue stretch at Asp-88–Asp-781 folds into the Myosin motor domain. Position 132 is an N6,N6,N6-trimethyllysine (Lys-132). Gly-181–Thr-188 is a binding site for ATP. Position 389 is a phosphotyrosine (Tyr-389). Position 419 is a phosphothreonine (Thr-419). Tyr-424 bears the Phosphotyrosine mark. Phosphoserine is present on Ser-625. Residues Leu-658–Glu-680 are actin-binding. His-756 is subject to Pros-methylhistidine. The segment at Lys-760–Gly-774 is actin-binding. An IQ domain is found at Asp-781–Ser-813. Residues Leu-842–Glu-1937 are a coiled coil. Phosphoserine occurs at positions 1091 and 1095. Residues Ile-1125–Glu-1171 are disordered. Residues Ala-1127–Glu-1155 show a composition bias toward basic and acidic residues. Phosphoserine occurs at positions 1161 and 1236. Thr-1254 bears the Phosphothreonine mark. At Ser-1260 the chain carries Phosphoserine. Position 1285 is a phosphothreonine (Thr-1285). A phosphoserine mark is found at Ser-1291, Ser-1302, and Ser-1305. Tyr-1463 carries the phosphotyrosine modification. Thr-1466 bears the Phosphothreonine mark. A Phosphotyrosine modification is found at Tyr-1491. Ser-1494 bears the Phosphoserine mark. Thr-1500 is modified (phosphothreonine). Ser-1513 carries the phosphoserine modification. At Thr-1516 the chain carries Phosphothreonine. Phosphoserine is present on residues Ser-1553, Ser-1573, Ser-1602, Ser-1713, and Ser-1725. At Thr-1729 the chain carries Phosphothreonine. Ser-1738 is subject to Phosphoserine.

This sequence belongs to the TRAFAC class myosin-kinesin ATPase superfamily. Myosin family. Muscle myosin is a hexameric protein that consists of 2 heavy chain subunits (MHC), 2 alkali light chain subunits (MLC) and 2 regulatory light chain subunits (MLC-2).

The protein localises to the cytoplasm. Its subcellular location is the myofibril. In terms of biological role, muscle contraction. The chain is Myosin-8 (Myh8) from Mus musculus (Mouse).